The following is a 750-amino-acid chain: Glutathione biosynthesis bifunctional protein GshAB (750 aa).

The tract at residues Met-1 to Ala-333 is glutamate--cysteine ligase. A disordered region spans residues Gln-32–Tyr-51. Residues Lys-489 to Phe-747 enclose the ATP-grasp domain. Ser-516–Arg-574 is a binding site for ATP. Positions 696, 717, and 719 each coordinate Mg(2+). Residues Asp-696, Glu-717, and Asn-719 each contribute to the Mn(2+) site.

The protein in the N-terminal section; belongs to the glutamate--cysteine ligase type 1 family. Type 2 subfamily. As to quaternary structure, monomer. Mg(2+) is required as a cofactor. It depends on Mn(2+) as a cofactor.

It catalyses the reaction L-cysteine + L-glutamate + ATP = gamma-L-glutamyl-L-cysteine + ADP + phosphate + H(+). It carries out the reaction gamma-L-glutamyl-L-cysteine + glycine + ATP = glutathione + ADP + phosphate + H(+). It functions in the pathway sulfur metabolism; glutathione biosynthesis; glutathione from L-cysteine and L-glutamate: step 1/2. It participates in sulfur metabolism; glutathione biosynthesis; glutathione from L-cysteine and L-glutamate: step 2/2. Its function is as follows. Synthesizes glutathione from L-glutamate and L-cysteine via gamma-L-glutamyl-L-cysteine. This Streptococcus agalactiae serotype III (strain NEM316) protein is Glutathione biosynthesis bifunctional protein GshAB.